Here is a 105-residue protein sequence, read N- to C-terminus: MKMIKAIVRPDKVDDIVDSLENAGYPAFTKINSVGRGKQGGLKVGEIFYDELPKTILLIAVNDDEVDEVVGLIKSSASTGNFGDGKIFIQPITEAYTIRTGETGI.

Belongs to the P(II) protein family.

Could be involved in the regulation of nitrogen fixation. The protein is Nitrogen fixation nifHD region GlnB-like protein 1 (glnBA) of Methanothermococcus thermolithotrophicus (Methanococcus thermolithotrophicus).